A 131-amino-acid polypeptide reads, in one-letter code: Profilin-2 (131 aa).

It belongs to the profilin family. As to quaternary structure, occurs in many kinds of cells as a complex with monomeric actin in a 1:1 ratio.

Its subcellular location is the cytoplasm. The protein localises to the cytoskeleton. Binds to actin and affects the structure of the cytoskeleton. At high concentrations, profilin prevents the polymerization of actin, whereas it enhances it at low concentrations. By binding to PIP2, it inhibits the formation of IP3 and DG. This Lilium longiflorum (Trumpet lily) protein is Profilin-2.